We begin with the raw amino-acid sequence, 199 residues long: Imidazole glycerol phosphate synthase subunit HisH 2 (199 aa).

A Glutamine amidotransferase type-1 domain is found at 1–199; it reads MIAVIDVSGN…NNFLSLESTC (199 aa). Cys76 acts as the Nucleophile in catalysis. Residues His177 and Glu179 contribute to the active site.

In terms of assembly, heterodimer of HisH and HisF.

It is found in the cytoplasm. The catalysed reaction is 5-[(5-phospho-1-deoxy-D-ribulos-1-ylimino)methylamino]-1-(5-phospho-beta-D-ribosyl)imidazole-4-carboxamide + L-glutamine = D-erythro-1-(imidazol-4-yl)glycerol 3-phosphate + 5-amino-1-(5-phospho-beta-D-ribosyl)imidazole-4-carboxamide + L-glutamate + H(+). It catalyses the reaction L-glutamine + H2O = L-glutamate + NH4(+). The protein operates within amino-acid biosynthesis; L-histidine biosynthesis; L-histidine from 5-phospho-alpha-D-ribose 1-diphosphate: step 5/9. IGPS catalyzes the conversion of PRFAR and glutamine to IGP, AICAR and glutamate. The HisH subunit provides the glutamine amidotransferase activity that produces the ammonia necessary to HisF for the synthesis of IGP and AICAR. This chain is Imidazole glycerol phosphate synthase subunit HisH 2, found in Legionella pneumophila subsp. pneumophila (strain Philadelphia 1 / ATCC 33152 / DSM 7513).